The chain runs to 230 residues: MLSLSQPCFSGTLLMLLASNFLLWKNVAPVPMYASLDEYGEMSIYDLLDHVTILSHNVSELTAEMHRIFMEDVRYKPGRWFSDRYLTACHTSTLTISVSKEGARQMPGVFLVKEMISMLTAWRYPLYHIITELSYMEQAPDEIISRARNIEEKIIVLIEALRGILSKIQPGPPENERYPVWNELASLQSPDEDLRHLTLFNLFQCLVKDSRKIDSSIRLLKCKLLYNRDC.

The signal sequence occupies residues 1–29; that stretch reads MLSLSQPCFSGTLLMLLASNFLLWKNVAP. A glycan (N-linked (GlcNAc...) asparagine) is linked at asparagine 57. Disulfide bonds link cysteine 89–cysteine 205 and cysteine 222–cysteine 230.

This sequence belongs to the somatotropin/prolactin family. Expressed in both placenta and decidual tissues. Detected first in deciduals cells early in gestation and in trophoblasts later in pregnancy.

It is found in the secreted. In Mus musculus (Mouse), this protein is Prolactin-6A1 (Prl6a1).